Reading from the N-terminus, the 350-residue chain is Protein TRIGALACTOSYLDIACYLGLYCEROL 1, chloroplastic (350 aa).

Residues 67 to 86 (SMSMLEEETSTENNAPSQEA) are disordered. The helical transmembrane segment at 98-117 (YIWRGLSVPIIAGQVVLRIL) threads the bilayer. Over 118–136 (KGKIHWRNTLQQLERTGPK) the chain is Stromal. A helical transmembrane segment spans residues 137–157 (SLGVCLLTSTFVGMAFTIQFV). The Chloroplast intermembrane portion of the chain corresponds to 158-168 (REFTRLGLNRS). The chain crosses the membrane as a helical span at residues 169–189 (IGGVLALAFSRELSPVITSIV). At 190–229 (VAGRMGSAFAAELGTMQVSEQTDTLRVLGADPIDYLITPR) the chain is on the stromal side. A helical transmembrane segment spans residues 230 to 250 (VIASCLALPFLTLMCFTVGMA). Over 251–288 (SSALLSDAVYGISINIIMDSAHRALRPWDIVSAMIKSQ) the chain is Chloroplast intermembrane. A helical transmembrane segment spans residues 289-309 (VFGAIISVISCSWGVTTTGGA). Topologically, residues 310-318 (KGVGESTTS) are stromal. Residues 319-339 (AVVMSLVGIFIADFVLSSFFF) traverse the membrane as a helical segment. Residues 340–350 (QGAGDSLKNCV) lie on the Chloroplast intermembrane side of the membrane.

The protein belongs to the MlaE permease family. In terms of assembly, permease subunit of the TGD complex, a lipid translocator at the inner chloroplast envelope membrane made of TGD1, TGD2 and TGD3. Interacts with TGD2 and TGD3 with an overall subunit stoichiometry of 2 TGD1, 2 TGD3 and 8 to 12 TGD2. Interacts with TGD5. In terms of tissue distribution, high levels in green tissues, but low levels in nongreen tissues such as roots.

It is found in the plastid. It localises to the chloroplast inner membrane. In terms of biological role, required during embryogenesis. Permease involved in lipid transfer from the endoplasmic reticulum (ER) to plastids, and necessary for thylakoids formation. In Arabidopsis thaliana (Mouse-ear cress), this protein is Protein TRIGALACTOSYLDIACYLGLYCEROL 1, chloroplastic.